Consider the following 380-residue polypeptide: Carbonic anhydrase 2 (380 aa).

A signal peptide spans 1–20 (MARTGALLLAALALAGCAQA). In terms of domain architecture, Alpha-carbonic anhydrase spans 38-322 (DHWDHSLNGE…HHHRRLLHNH (285 aa)). Intrachain disulfides connect Cys61–Cys264, Cys194–Cys198, and Cys296–Cys354. N-linked (GlcNAc...) asparagine glycosylation is present at Asn101. Residue His112 is the Proton acceptor of the active site. Asn135 is a glycosylation site (N-linked (GlcNAc...) asparagine). Zn(2+) is bound by residues His163, His165, and His182. 260–261 (TT) lines the substrate pocket. Asn297 carries an N-linked (GlcNAc...) asparagine glycan.

This sequence belongs to the alpha-carbonic anhydrase family. As to quaternary structure, tetramer of two large and two small subunits linked by two disulfide bonds. Zn(2+) is required as a cofactor.

It is found in the periplasm. It catalyses the reaction hydrogencarbonate + H(+) = CO2 + H2O. Functionally, reversible hydration of carbon dioxide. The polypeptide is Carbonic anhydrase 2 (CAH2) (Chlamydomonas reinhardtii (Chlamydomonas smithii)).